Here is a 903-residue protein sequence, read N- to C-terminus: MGTMRLFLLAVLFLFSFARAGCDPKIVNIGAVLSTKKHEQIFREAVNQANKRHFTRKIQLNATSVTHRPNAIQMALSVCEDLISSQVYAILVSHPPAPTDHLTPTPISYTAGFYRIPVIGLTTRMSIYSDKSIHLSFLRTVPPYSHQALVWFEMMRLFNWNHVILIVSDDHEGRAAQKKLETLLEEKESKADKVLQFEPGTKNLTALLLEAKELEARVIILSASEDDATAVYKSAAMLDMTGAGYVWLVGEREISGSALRYAPDGIIGLQLINGKNESAHISDAVAVVAQAIHELFEMENITDPPRGCVGNTNIWKTGPLFKRVLMSSKYPDGVTGRIEFNEDGDRKFANYSIMNLQNRKLVQVGIFNGSYIIQNDRKIIWPGGETERPQGYQMSTRLKIVTIHQEPFVYVRPTTSDGTCREEYTINGDPIKKVICNGPNETIPGRPTVPQCCYGFCVDLLIKLAREMNFTYEVHLVADGKFGTQERVNNSNKKEWNGMMGELLSGQADMIVAPLTINNERAQYIEFSKPFKYQGLTILVKKEIPRSTLDSFMQPFQSTLWLLVGLSVHVVAVMLYLLDRFSPFGRFKVNSEEEEEDALTLSSAMWFSWGVLLNSGIGEGAPRSFSARILGMVWAGFAMIIVASYTANLAAFLVLDRPEERITGINDPRLRNPSDKFIYATVKQSSVDIYFRRQVELSTMYRHMEKHNYESAAEAIQAVRDNKLHAFIWDSAVLEFEASQKCDLVTTGELFFRSGFGIGMRKDSPWKQNVSLNILKSHENGFMEELDKTWVRYQECDSRSNAPATLTFENMAGVFMLVAGGIVAGIFLIFIEIAYKRHKDARRKQMQLAFAAVNVWRKNLQDRKSGRAEPDPKKKASFRSITSTLASSFKRRRSSKDTVNVVV.

Positions 1–20 are cleaved as a signal peptide; that stretch reads MGTMRLFLLAVLFLFSFARA. Topologically, residues 21 to 557 are extracellular; that stretch reads GCDPKIVNIG…TLDSFMQPFQ (537 aa). 9 N-linked (GlcNAc...) asparagine glycosylation sites follow: N61, N203, N276, N300, N350, N368, N440, N469, and N489. A disulfide bridge connects residues C79 and C308. 2 disulfide bridges follow: C420–C452 and C436–C453. Glycine is bound by residues P514, T516, and R521. The helical transmembrane segment at 558-578 threads the bilayer; that stretch reads STLWLLVGLSVHVVAVMLYLL. Over 579–600 the chain is Cytoplasmic; the sequence is DRFSPFGRFKVNSEEEEEDALT. Positions 601 to 620 are pore-forming; sequence LSSAMWFSWGVLLNSGIGEG. Residues 601 to 622 constitute an intramembrane region (discontinuously helical); sequence LSSAMWFSWGVLLNSGIGEGAP. The Cytoplasmic segment spans residues 623 to 628; the sequence is RSFSAR. Residues 629–645 traverse the membrane as a helical segment; that stretch reads ILGMVWAGFAMIIVASY. Over 646 to 810 the chain is Extracellular; the sequence is TANLAAFLVL…NAPATLTFEN (165 aa). The glycine site is built by S686 and D730. Cysteines 742 and 796 form a disulfide. N769 carries N-linked (GlcNAc...) asparagine glycosylation. Residues 811-831 traverse the membrane as a helical segment; it reads MAGVFMLVAGGIVAGIFLIFI. Topologically, residues 832 to 903 are cytoplasmic; it reads EIAYKRHKDA…SSKDTVNVVV (72 aa).

Belongs to the glutamate-gated ion channel (TC 1.A.10.1) family. NR1/GRIN1 subfamily. As to quaternary structure, heterotetramer; the NMDAR subunits are modular and harbor tiered domains that function in concert to regulate opening and closing of the cation-selective ion channel pore. Forms heterotetrameric channels composed of two GluN1/zeta subunits (GRIN1), and two identical GluN2/epsilon subunits (GRIN2A, GRIN2B, GRIN2C or GRIN2D) or GluN3 subunits (GRIN3A or GRIN3B) (in vitro). Does not form functional channels by itself. Can also form heterotetrameric channels that contain at least two GluN1 subunits and at least two different GluN2 subunits (or a combination of one GluN2 and one GluN3 subunits) (in vitro). In vivo, the subunit composition may vary in function of the expression levels of the different subunits.

It is found in the cell membrane. It localises to the postsynaptic cell membrane. The protein resides in the postsynaptic density membrane. Its subcellular location is the synaptic cell membrane. It catalyses the reaction Ca(2+)(in) = Ca(2+)(out). It carries out the reaction Na(+)(in) = Na(+)(out). The catalysed reaction is K(+)(in) = K(+)(out). Its activity is regulated as follows. NMDA glutamate receptor activity is modulated by zinc ions. The NMDA glutamate receptor activity of the heterotetramer with grin2b is stimulated by micromolar levels of Zn(2+). The NMDA glutamate receptor activity of the heterotetramer with grin2a is inhibited by nanomolar levels of Zn(2+). In terms of biological role, component of N-methyl-D-aspartate (NMDA) receptors (NMDARs) that function as heterotetrameric, ligand-gated cation channels with high calcium permeability and voltage-dependent block by Mg(2+). NMDARs participate in synaptic plasticity. Channel activation requires binding of the neurotransmitter L-glutamate to the GluN2 subunit, glycine binding to the GluN1 subunit, plus membrane depolarization to eliminate channel inhibition by Mg(2+). NMDARs mediate simultaneously the potasium efflux and the influx of calcium and sodium. Each GluN2 or GluN3 subunit confers differential attributes to channel properties, including activation, deactivation and desensitization kinetics, pH sensitivity, Ca2(+) permeability, and binding to allosteric modulators. This is Glutamate receptor ionotropic, NMDA 1 from Xenopus laevis (African clawed frog).